The chain runs to 494 residues: Protein DETOXIFICATION 23 (494 aa).

Residues 1 to 25 (MARREGEVTETLLKKSTENRGEDRD) form a disordered region. 12 helical membrane-spanning segments follow: residues 40 to 60 (LWVV…LSLI), 74 to 94 (AAYS…LLGM), 123 to 143 (IVLT…GPIL), 158 to 178 (IIAL…TCQM), 188 to 208 (IIAY…WLLV), 223 to 243 (LVAH…GGCT), 268 to 288 (GGMI…TGNL), 297 to 317 (ALAI…GFMA), 340 to 360 (MVVV…FLFL), 384 to 404 (LLAF…VAVG), 416 to 436 (LACY…VVGL), and 441 to 461 (VWLG…VMTM).

The protein belongs to the multi antimicrobial extrusion (MATE) (TC 2.A.66.1) family.

It is found in the membrane. This is Protein DETOXIFICATION 23 from Arabidopsis thaliana (Mouse-ear cress).